The primary structure comprises 306 residues: Homoserine O-acetyltransferase (306 aa).

Cys-142 functions as the Acyl-thioester intermediate in the catalytic mechanism. Lys-163 and Ser-192 together coordinate substrate. His-235 (proton acceptor) is an active-site residue. The active site involves Glu-237. Position 249 (Arg-249) interacts with substrate.

This sequence belongs to the MetA family.

Its subcellular location is the cytoplasm. The enzyme catalyses L-homoserine + acetyl-CoA = O-acetyl-L-homoserine + CoA. Its pathway is amino-acid biosynthesis; L-methionine biosynthesis via de novo pathway; O-acetyl-L-homoserine from L-homoserine: step 1/1. Transfers an acetyl group from acetyl-CoA to L-homoserine, forming acetyl-L-homoserine. The protein is Homoserine O-acetyltransferase of Clostridium botulinum (strain Eklund 17B / Type B).